The primary structure comprises 131 residues: Phosphoribosyl-ATP pyrophosphatase 2 (131 aa).

Residues 105-131 form a disordered region; the sequence is RIGKPAAPHATRRPVIPQEARAVRKHR.

The protein belongs to the PRA-PH family.

The protein resides in the cytoplasm. The catalysed reaction is 1-(5-phospho-beta-D-ribosyl)-ATP + H2O = 1-(5-phospho-beta-D-ribosyl)-5'-AMP + diphosphate + H(+). It participates in amino-acid biosynthesis; L-histidine biosynthesis; L-histidine from 5-phospho-alpha-D-ribose 1-diphosphate: step 2/9. The sequence is that of Phosphoribosyl-ATP pyrophosphatase 2 (hisE2) from Rhodopseudomonas palustris (strain ATCC BAA-98 / CGA009).